We begin with the raw amino-acid sequence, 365 residues long: Aminomethyltransferase (365 aa).

This sequence belongs to the GcvT family. As to quaternary structure, the glycine cleavage system is composed of four proteins: P, T, L and H.

The catalysed reaction is N(6)-[(R)-S(8)-aminomethyldihydrolipoyl]-L-lysyl-[protein] + (6S)-5,6,7,8-tetrahydrofolate = N(6)-[(R)-dihydrolipoyl]-L-lysyl-[protein] + (6R)-5,10-methylene-5,6,7,8-tetrahydrofolate + NH4(+). In terms of biological role, the glycine cleavage system catalyzes the degradation of glycine. In Desulfitobacterium hafniense (strain Y51), this protein is Aminomethyltransferase.